The following is a 451-amino-acid chain: Velvet complex subunit 2 (451 aa).

Disordered stretches follow at residues 1 to 95 (MNTT…PRSI), 205 to 312 (PGQS…QTNP), and 426 to 451 (PIRK…DDDY). Composition is skewed to polar residues over residues 18–28 (TMPSLHDTTYR), 40–62 (MPQT…NSLP), and 205–217 (PGQS…SPTY). The Velvet domain maps to 92-428 (PRSITVDGRK…ATQGIKIPIR (337 aa)). Over residues 267-283 (PQQSNYYYPQPSQSIPS) the composition is skewed to low complexity. The segment covering 427–445 (IRKDGKDGPGKGGKDGSRG) has biased composition (basic and acidic residues).

The protein belongs to the velvet family. VelB subfamily. As to quaternary structure, component of the heterotrimeric velvet complex composed of LAE1, VEL1 and VEL2; VEL1 acting as a bridging protein between LAE1 and VEL2. Forms a heterodimeric complex with VOS1; the formation of the VEL2-VOS1 complex is light-dependent.

The protein localises to the nucleus. It localises to the cytoplasm. In terms of biological role, component of the velvet transcription factor complex that controls sexual/asexual developmental ratio in response to light, promoting sexual development in the darkness while stimulating asexual sporulation under illumination. The velvet complex acts as a global regulator for secondary metabolite gene expression. Component of the VEL2-VOS1 heterodimeric complex that plays a dual role in activating genes associated with spore maturation and repressing certain development-associated genes. The VEL2-VOS1 complex binds DNA through the DNA-binding domain of VOS1 that recognizes an 11-nucleotide consensus sequence 5'-CTGGCCGCGGC-3' consisting of two motifs in the promoters of key developmental regulatory genes. Controls the expression of the oxalic acid and melanin gene clusters. Involved in the resistance to oxidative stress. Required for full virulence. In Botryotinia fuckeliana (strain B05.10) (Noble rot fungus), this protein is Velvet complex subunit 2.